Consider the following 252-residue polypeptide: MTKASATFGFKDVDASAKAGLVRGVFDRVAKNYDLMNDVMSGGVHRLWKDAVAARLNPQPGEIIIDCAGGTGDMARRFAKMTRAAQERRGGPDALINIIDYNAEMIGAGIEKGGAPEITWTVGDAQRLPLPDAYADAYVISFGIRNVTDIDAALREARRVLKPGGRFLCLEFSKPVTEALSKAYDAYSFKLIPQFGEWLAKDRDAYQYLVESIRRFPDQKTFAGMMENAGFKRVTITNFTGGVAAMHQGWAL.

S-adenosyl-L-methionine contacts are provided by residues T71, D100, 124–125 (DA), and S141.

The protein belongs to the class I-like SAM-binding methyltransferase superfamily. MenG/UbiE family.

It catalyses the reaction a 2-demethylmenaquinol + S-adenosyl-L-methionine = a menaquinol + S-adenosyl-L-homocysteine + H(+). It carries out the reaction a 2-methoxy-6-(all-trans-polyprenyl)benzene-1,4-diol + S-adenosyl-L-methionine = a 5-methoxy-2-methyl-3-(all-trans-polyprenyl)benzene-1,4-diol + S-adenosyl-L-homocysteine + H(+). Its pathway is quinol/quinone metabolism; menaquinone biosynthesis; menaquinol from 1,4-dihydroxy-2-naphthoate: step 2/2. It participates in cofactor biosynthesis; ubiquinone biosynthesis. Functionally, methyltransferase required for the conversion of demethylmenaquinol (DMKH2) to menaquinol (MKH2) and the conversion of 2-polyprenyl-6-methoxy-1,4-benzoquinol (DDMQH2) to 2-polyprenyl-3-methyl-6-methoxy-1,4-benzoquinol (DMQH2). This is Ubiquinone/menaquinone biosynthesis C-methyltransferase UbiE from Caulobacter sp. (strain K31).